Here is an 807-residue protein sequence, read N- to C-terminus: Dual specificity protein kinase YAK1 (807 aa).

Residues 1-19 show a composition bias toward low complexity; that stretch reads MNSSNNNDSSSSNSNMNNS. A disordered region spans residues 1-84; it reads MNSSNNNDSS…QQQQQQQQNS (84 aa). The segment covering 20–31 has biased composition (polar residues); it reads LSPTLVTHSDAS. A Phosphoserine modification is found at serine 38. Residues 55–84 are compositionally biased toward low complexity; the sequence is NQGSQRSPQQQHQNHHQQQQQQQQQQQQNS. Phosphoserine occurs at positions 115, 118, and 127. Residues 124–180 are disordered; sequence RRKSSLVVPPARAPAPNPFQYDSYPAYTSSNTSLAGNSSGQYPSGYQQQQQQVYQQG. A compositionally biased stretch (polar residues) spans 149 to 160; the sequence is AYTSSNTSLAGN. Low complexity predominate over residues 161-180; sequence SSGQYPSGYQQQQQQVYQQG. Serine 206 is modified (phosphoserine). Low complexity predominate over residues 214–224; the sequence is SNFSSLNSNTN. Residues 214–254 form a disordered region; sequence SNFSSLNSNTNQGTNSIPVMSPYRRLSAYPPSTSPPLQPPF. Phosphoserine occurs at positions 240, 245, and 247. Position 288 is a phosphothreonine (threonine 288). Serine 295 bears the Phosphoserine mark. The 336-residue stretch at 369 to 704 folds into the Protein kinase domain; the sequence is YLVLDILGQG…PQQAMLHPFI (336 aa). Residues 375-383 and lysine 398 contribute to the ATP site; that span reads LGQGTFGQV. Aspartate 496 functions as the Proton acceptor in the catalytic mechanism. At tyrosine 530 the chain carries Phosphotyrosine. The segment at 714-758 is disordered; sequence FPPGSSLPGPSEKHDDAKGQQSEYGSANDSSNNAGHNYVYNPSSA. Residues 732-758 show a composition bias toward polar residues; it reads GQQSEYGSANDSSNNAGHNYVYNPSSA.

The protein belongs to the protein kinase superfamily. CMGC Ser/Thr protein kinase family. MNB/DYRK subfamily. Phosphorylated; highly.

It is found in the cytoplasm. It localises to the nucleus. It catalyses the reaction L-seryl-[protein] + ATP = O-phospho-L-seryl-[protein] + ADP + H(+). It carries out the reaction L-threonyl-[protein] + ATP = O-phospho-L-threonyl-[protein] + ADP + H(+). The catalysed reaction is L-tyrosyl-[protein] + ATP = O-phospho-L-tyrosyl-[protein] + ADP + H(+). In terms of biological role, negative regulator of the cell cycle acting downstream of the cAMP-dependent protein kinase. Part of a glucose-sensing system involved in growth control in response to glucose availability. Phosphorylates POP2. This is Dual specificity protein kinase YAK1 (YAK1) from Saccharomyces cerevisiae (strain ATCC 204508 / S288c) (Baker's yeast).